The chain runs to 211 residues: Potassium-transporting ATPase KdpC subunit (211 aa).

The helical transmembrane segment at 13 to 35 threads the bilayer; sequence VVTMVLTGLLYPLAVTGLAQLLF.

Belongs to the KdpC family. In terms of assembly, the system is composed of three essential subunits: KdpA, KdpB and KdpC.

It is found in the cell membrane. Part of the high-affinity ATP-driven potassium transport (or Kdp) system, which catalyzes the hydrolysis of ATP coupled with the electrogenic transport of potassium into the cytoplasm. This subunit acts as a catalytic chaperone that increases the ATP-binding affinity of the ATP-hydrolyzing subunit KdpB by the formation of a transient KdpB/KdpC/ATP ternary complex. This is Potassium-transporting ATPase KdpC subunit from Myxococcus xanthus.